Here is a 1840-residue protein sequence, read N- to C-terminus: MKAPHSATYQDNYADAAMTARTRPSMDMDQQRNRNQAELRLLPAQRTSTSAFESPDLRFNKARRRRRSEQVPPVVVEYRRSYRVLIVSALLVSLAASFVTLSAGFQLDGSQNSFYTFRKWYTGLNGTLELEFKTEQPNGLVLYTDDGGTYDFFELKLVEGALRLRYNLGGGAQIITVGRELHDGHWHKVQVLRNDEQTSLIVDGVSQQRSTKGKEFQFGKFASNSDVYVGGMPNWYSSKLALLALPSVIFEPRFRGAIRNLVYADQPGGSTRRQEIKQQRDIKCGDVPCDHGELPARERPLRGVRGGNTTDACERNDPCQHGGICISTDSGPICECRNLEYDGQYCEKEKAPSEATFRGTQFLSYDLGQTGAEPIVSAQDAISFYFRTRQPNGLLFYTGHGTDYLNLALRDGGVSLTMGLANGKQEMHIKPSKVRFDDHQWHKVTVHRRIQEISSITSFCRLVTVVDDVYTDHSHIAGKFTMLSSSRVYVGGAVNPRALLGARVHTNFVGCLRKVEFSADTLNLNLIDLAKSGSKLIQVAGNLEYQCPSGDPQDPVTFTTRESHLVLPPWETGKQSSISFKFRTKEPNGIIVLATGSKQPRAKNPVLIAIELLNGHIYIHLDLGSGASKVRASRRRVDDGDWHDLILRRNGRDAKVSVDGVWNDFRTPGDGTILELDGHMYLGGVGPAYNSVSWPAAIWTATLRQGFVGCLRDLVLSGKAIDIAAFARVQDSASVKPSCHVQANVCNGNPCLNGGTCLEGWNRPICDCSATLYGGPTCGRELATLAFNGSQHMTIWLGNGQGTKTQTEELVIRFKTSRPAGLLLLTSAESNSPDRLEIALVAGRVRASVRLSDREKNLLAGQSVLNDNNWHTIRFSRRASNLRLQVDGAPPVRGMLSETILGRHSTMEIRSVHLGGLFHAEEEIQMTSTMPNFVGQMQGLVFNGQRYLDIVKSLGPELSALPSATFKLTARFVNSPAGQPYHAATFRSKHSYVGLAMLKAYNSISIDFRFKTVEPNGLLVFNGGRRNDFVAVELVNGHIHYTFDLGDGPVTMRDKSRIHMNDNRWHQVSIRRPGPKTHTLTVDDSFEIISLTGNNMHLELAGILYIGGVFKDMYSKLPASISSRSGFEGCLASLDLGDASPSLTSDAVVPSSLVVSGCEGPTKCSQNACANRGNCVQQWNAYACECDMTSYTGPTCYDESIAYEFGNNKGMVQYTFPENAQADTEEDNIALGFITTRPDAVLLRVESATTQDYMELEIVEGNIFMVYNIGSVDLPLGEIGTKVNDNAYHVVRFQRKGGNATLQLDDYNVQALTPQSHHSTVFNTMSNVQVGGKFSRNGRNRIERPFAGVIAGLSVNKLRILDLAVERDPHITIRGDVQLVTGVLDRNDLQRMQQTPASGYPGALDDLIFSGAGSGCRGDDEDECTPPFESGSGDDLITPVYVPPTKQTTTSQQGNSLSTGGSSSGGVITNGTERACDDEDCVHGSGDYGETTEQFTSTSTARGSESNNEMVTITTTGRSDVTTEQHQGSSSSSSSGSTPSYATTQSSSSSSSGGSAASTPGQVSTTSSVATSSTQRATSSSTSTSSSTTSTTTTTTTTQATPPPEIRSTVTERETTPYDIYIAGGGMGGSGRNDHDRMQLPDEHHPLPPLPPPIPPQDPPPYGPYGGNTYNTNMNNYRPKGKGGRINSIEEERTAMIIGIVAGILIAVVLVILLVLWLKSNGDRGYKTESEKAAAYGSHNPNAALLGNTSTNGSYHQQRQHHMHGGGGGGGAGQQQHHAQQQMHNGHNGNGNGGGGGGGGMMSSGSGSLGYGSDGRPQMAGLVQPKAKKRDSKDVKEWYV.

Residues 1-50 (MKAPHSATYQDNYADAAMTARTRPSMDMDQQRNRNQAELRLLPAQRTSTS) are disordered. Residues 1-1696 (MKAPHSATYQ…NSIEEERTAM (1696 aa)) are Extracellular-facing. The span at 24 to 37 (PSMDMDQQRNRNQA) shows a compositional bias: basic and acidic residues. A Laminin G-like 1 domain is found at 104–289 (GFQLDGSQNS…RDIKCGDVPC (186 aa)). The region spanning 309 to 347 (TTDACERNDPCQHGGICISTDSGPICECRNLEYDGQYCE) is the EGF-like 1 domain. 8 disulfide bridges follow: Cys313–Cys325, Cys319–Cys334, Cys336–Cys346, Cys511–Cys547, Cys710–Cys739, Cys746–Cys757, Cys751–Cys766, and Cys768–Cys778. Laminin G-like domains are found at residues 352–547 (PSEA…EYQC) and 554–739 (DPVT…KPSC). The EGF-like 2 domain maps to 742–779 (QANVCNGNPCLNGGTCLEGWNRPICDCSATLYGGPTCG). 2 Laminin G-like domains span residues 784 to 964 (TLAF…LPSA) and 982 to 1158 (HAAT…VSGC). 4 cysteine pairs are disulfide-bonded: Cys1130-Cys1158, Cys1164-Cys1175, Cys1169-Cys1184, and Cys1186-Cys1196. In terms of domain architecture, EGF-like 3 spans 1160-1197 (GPTKCSQNACANRGNCVQQWNAYACECDMTSYTGPTCY). The Laminin G-like 6 domain occupies 1201 to 1416 (IAYEFGNNKG…LIFSGAGSGC (216 aa)). The tract at residues 1411–1651 (GAGSGCRGDD…DEHHPLPPLP (241 aa)) is disordered. Positions 1447–1472 (QTTTSQQGNSLSTGGSSSGGVITNGT) are enriched in low complexity. Residues 1491 to 1527 (TTEQFTSTSTARGSESNNEMVTITTTGRSDVTTEQHQ) show a composition bias toward polar residues. Residues 1528-1600 (GSSSSSSSGS…TTTTTTTTQA (73 aa)) show a composition bias toward low complexity. Positions 1632–1646 (RNDHDRMQLPDEHHP) are enriched in basic and acidic residues. The chain crosses the membrane as a helical span at residues 1697-1717 (IIGIVAGILIAVVLVILLVLW). Residues 1718-1840 (LKSNGDRGYK…DSKDVKEWYV (123 aa)) are Cytoplasmic-facing. The disordered stretch occupies residues 1737-1840 (GSHNPNAALL…DSKDVKEWYV (104 aa)). Positions 1747–1757 (GNTSTNGSYHQ) are enriched in polar residues. Low complexity predominate over residues 1774 to 1787 (QQQHHAQQQMHNGH). Residues 1788-1813 (NGNGNGGGGGGGGMMSSGSGSLGYGS) are compositionally biased toward gly residues. Asp1831 and Asp1834 together coordinate Zn(2+). The segment covering 1831–1840 (DSKDVKEWYV) has biased composition (basic and acidic residues). Residues 1837-1840 (EWYV) carry the PDZ domain binding motif.

This sequence belongs to the neurexin family. Interacts (via C-terminal PDZ binding motif) with CASK (via PDZ domain). Interacts (via cytoplasmic domain) with apolpp/ApoLI; the interaction supports apolpp/ApoLI protein stability. Interact (via cytoplasmic domain) with Spn/Spinophilin. Interacts with RhoGAP100F/Syd-1 (via PDZ domain); RhoGAP100F/Syd-1 may recruit Nrx-1 to the presynaptic active zone. As to expression, expressed in brain, with expression in medulla, lamina, lobula, lobula plate, mushroom body and antennal lobe, and in retina (at protein level). Expressed in rabdomere of photoreceptor cells (at protein level).

The protein localises to the synaptic cell membrane. It is found in the presynaptic cell membrane. It localises to the postsynaptic cell membrane. In terms of biological role, neuronal cell adhesion protein involved in synapse formation, development of synaptic active zones, synaptic regulation and visual function. Plays a role in cell adhesion between the pre- and the postsynaptic cell. Required for proper proliferation of synaptic boutons during larval development, a process necessary for coordinated matching of pre-and postsynaptic compartments. Promotes presynaptic active zone formation and neurotransmitter release. Spn/Spinophilin fine-tunes nrx-1/nlg1 signaling at the pre-synapse to control active zone number and functionality and thereby optimizing action potential-induced exocytosis. Required for synapse formation in central nervous system. By regulating synapse formation, may play a role in larval associative learning. Together with RhoGAP100F/syd-1, controls synapse formation at the neuromuscular junction. Essential for synaptic vesicle cycling, which plays critical roles in neurotransmission at neuromuscular junctions (NMJ). Regulated and restricts formation of glutamate receptor clusters. Mediates retinoid transport and subsequent rhodopsin maturation and may regulate lipoprotein function; thereby playing a role in vision. Regulates sleep, circadian rhythm and synaptic plasticity. Together with CASK, required for locomotion. The chain is Neurexin 1 from Drosophila melanogaster (Fruit fly).